Here is a 651-residue protein sequence, read N- to C-terminus: MTHPSFIRLRFAFKLSFAIVAALFLGFHLQLETPRWSVLTAAIVSAGPAFAAGGEPFSGAIRHRGWLRIIGTFIGCIGGLVIIVLTIRAPVLTLMLCCLWAGICTWISSLVRVENSYAFGLAGYTALIIIVTTGETPLLTPQFAVERCSEIVLGIVCAVMADLLFSPRSIKQDIDRLVDKVLVDQYRLLQLCIQPAEKSEIDRAWNELVKNTTSLNGMRSYLMMESSRWQRCNRRLQVLHTESLALITQACETYLVMSNHPEVISAELKTMLSEPAQTPAEIHQQMKKLRQFIAASHSEAIPHTISSWVGAATRYLLLSKGIQTNSSINQVEEDILAGDAPVKPISAEGHHAMINGLRTGIATAIGGLFWLWTGWTSGAGCMVMIAVVTSLAMRTPNPRRMALDFLVGVIIALPIGALYFMFIIPSTQQSMLLLCISLGVLAFIIGIEVQKRRLGSLGTLASTINIIVLSNPMIFNVRQFLDSALGQIVGCFVSLIVLLLIRDNAKDRTGRTLLNRFVYSAVSALTTNKTKRGENHLPALYQQLNQLLMMFPADIDKYRLALTLIIAHQRLNRTEIPVNAELSAFHKQIRSTAERVITVNNDQKRRYYFARLLQELDQYQQKLVDYQAADAVIRPVKRLTEMLRKYQSALI.

The next 11 helical transmembrane spans lie at 11–31 (FAFK…HLQL), 41–61 (AAIV…SGAI), 67–87 (LRII…VLTI), 91–111 (VLTL…SSLV), 119–139 (FGLA…TPLL), 150–170 (EIVL…PRSI), 368–388 (LFWL…IAVV), 405–425 (FLVG…FIIP), 429–449 (QSML…GIEV), 455–475 (GSLG…PMIF), and 481–501 (LDSA…LLLI).

This sequence belongs to the aromatic acid exporter ArAE (TC 2.A.85) family.

The protein resides in the cell inner membrane. Functionally, forms an efflux pump with AaeA. Could function as a metabolic relief valve, allowing to eliminate certain compounds when they accumulate to high levels in the cell. This chain is p-hydroxybenzoic acid efflux pump subunit AaeB, found in Yersinia pseudotuberculosis serotype O:1b (strain IP 31758).